A 305-amino-acid polypeptide reads, in one-letter code: Probable 4-deoxy-4-formamido-L-arabinose-phosphoundecaprenol deformylase ArnD (305 aa).

In terms of domain architecture, NodB homology spans 7-262 (TKVGLRIDVD…QAKENNIEFV (256 aa)).

This sequence belongs to the polysaccharide deacetylase family. ArnD deformylase subfamily.

It carries out the reaction 4-deoxy-4-formamido-alpha-L-arabinopyranosyl di-trans,octa-cis-undecaprenyl phosphate + H2O = 4-amino-4-deoxy-alpha-L-arabinopyranosyl di-trans,octa-cis-undecaprenyl phosphate + formate. The protein operates within glycolipid biosynthesis; 4-amino-4-deoxy-alpha-L-arabinose undecaprenyl phosphate biosynthesis; 4-amino-4-deoxy-alpha-L-arabinose undecaprenyl phosphate from UDP-4-deoxy-4-formamido-beta-L-arabinose and undecaprenyl phosphate: step 2/2. It functions in the pathway bacterial outer membrane biogenesis; lipopolysaccharide biosynthesis. Its function is as follows. Catalyzes the deformylation of 4-deoxy-4-formamido-L-arabinose-phosphoundecaprenol to 4-amino-4-deoxy-L-arabinose-phosphoundecaprenol. The modified arabinose is attached to lipid A and is required for resistance to polymyxin and cationic antimicrobial peptides. The chain is Probable 4-deoxy-4-formamido-L-arabinose-phosphoundecaprenol deformylase ArnD from Shewanella sediminis (strain HAW-EB3).